Here is a 257-residue protein sequence, read N- to C-terminus: UPF0246 protein Sama_0917 (257 aa).

This sequence belongs to the UPF0246 family.

This is UPF0246 protein Sama_0917 from Shewanella amazonensis (strain ATCC BAA-1098 / SB2B).